Reading from the N-terminus, the 559-residue chain is 5'-AMP-activated protein kinase catalytic subunit alpha-1 (559 aa).

A Protein kinase domain is found at 27-279; sequence YILGDTLGVG…IKDIREHEWF (253 aa). Thr32 carries the post-translational modification Phosphothreonine. ATP-binding positions include 33-41 and Lys56; that span reads LGVGTFGKV. Asp150 functions as the Proton acceptor in the catalytic mechanism. Residue Thr183 is modified to Phosphothreonine; by LKB1 and CaMKK2. The tract at residues 302–381 is AIS; sequence EALKEVCEKF…PERVPFLVAE (80 aa). Residue Thr355 is modified to Phosphothreonine. Ser356 is modified (phosphoserine). Residue Ser360 is modified to Phosphoserine; by ULK1. Thr368 carries the phosphothreonine; by ULK1 modification. Thr382 is subject to Phosphothreonine. Ser397 is subject to Phosphoserine; by ULK1. A phosphoserine mark is found at Ser467 and Ser486. Polar residues predominate over residues 485–505; it reads KSGTATPQRSGSISNYRSCQR. The disordered stretch occupies residues 485–536; the sequence is KSGTATPQRSGSISNYRSCQRSDSDAEAQGKPSDVSLTSSVTSLDSSPVDVA. Thr488 carries the post-translational modification Phosphothreonine; by ULK1. Thr490 carries the phosphothreonine modification. Ser496, Ser508, Ser524, and Ser527 each carry phosphoserine. A compositionally biased stretch (low complexity) spans 516–535; it reads PSDVSLTSSVTSLDSSPVDV.

This sequence belongs to the protein kinase superfamily. CAMK Ser/Thr protein kinase family. SNF1 subfamily. In terms of assembly, AMPK is a heterotrimer of an alpha catalytic subunit (PRKAA1 or PRKAA2), a beta (PRKAB1 or PRKAB2) and a gamma non-catalytic subunits (PRKAG1, PRKAG2 or PRKAG3). Interacts with FNIP1 and FNIP2. It depends on Mg(2+) as a cofactor. In terms of processing, phosphorylated at Thr-183 by STK11/LKB1 in complex with STE20-related adapter-alpha (STRADA) pseudo kinase and CAB39. Also phosphorylated at Thr-183 by CAMKK2; triggered by a rise in intracellular calcium ions, without detectable changes in the AMP/ATP ratio. CAMKK1 can also phosphorylate Thr-183, but at a much lower level. Dephosphorylated by protein phosphatase 2A and 2C (PP2A and PP2C). Phosphorylated by ULK1 and ULK2; leading to negatively regulate AMPK activity and suggesting the existence of a regulatory feedback loop between ULK1, ULK2 and AMPK. Dephosphorylated by PPM1A and PPM1B. Post-translationally, ubiquitinated. Glycosylated; O-GlcNAcylated by OGT, promoting the AMP-activated protein kinase (AMPK) activity.

The protein localises to the cytoplasm. It localises to the nucleus. The enzyme catalyses L-seryl-[protein] + ATP = O-phospho-L-seryl-[protein] + ADP + H(+). It catalyses the reaction L-threonyl-[protein] + ATP = O-phospho-L-threonyl-[protein] + ADP + H(+). The catalysed reaction is L-seryl-[acetyl-CoA carboxylase] + ATP = O-phospho-L-seryl-[acetyl-CoA carboxylase] + ADP + H(+). It carries out the reaction L-seryl-[3-hydroxy-3-methylglutaryl-coenzyme A reductase] + ATP = O-phospho-L-seryl-[3-hydroxy-3-methylglutaryl-coenzyme A reductase] + ADP + H(+). The enzyme catalyses L-seryl-[tau protein] + ATP = O-phospho-L-seryl-[tau protein] + ADP + H(+). It catalyses the reaction L-threonyl-[tau protein] + ATP = O-phospho-L-threonyl-[tau protein] + ADP + H(+). Its activity is regulated as follows. Activated by phosphorylation on Thr-183. Binding of AMP to non-catalytic gamma subunit (PRKAG1, PRKAG2 or PRKAG3) results in allosteric activation, inducing phosphorylation on Thr-183. AMP-binding to gamma subunit also sustains activity by preventing dephosphorylation of Thr-183. ADP also stimulates Thr-183 phosphorylation, without stimulating already phosphorylated AMPK. ATP promotes dephosphorylation of Thr-183, rendering the enzyme inactive. Under physiological conditions AMPK mainly exists in its inactive form in complex with ATP, which is much more abundant than AMP. Selectively inhibited by compound C (6-[4-(2-Piperidin-1-yl-ethoxy)-phenyl)]-3-pyridin-4-yl-pyyrazolo[1,5-a] pyrimidine. Activated by resveratrol, a natural polyphenol present in red wine, and S17834, a synthetic polyphenol. Functionally, catalytic subunit of AMP-activated protein kinase (AMPK), an energy sensor protein kinase that plays a key role in regulating cellular energy metabolism. In response to reduction of intracellular ATP levels, AMPK activates energy-producing pathways and inhibits energy-consuming processes: inhibits protein, carbohydrate and lipid biosynthesis, as well as cell growth and proliferation. AMPK acts via direct phosphorylation of metabolic enzymes, and by longer-term effects via phosphorylation of transcription regulators. Regulates lipid synthesis by phosphorylating and inactivating lipid metabolic enzymes such as ACACA, ACACB, GYS1, HMGCR and LIPE; regulates fatty acid and cholesterol synthesis by phosphorylating acetyl-CoA carboxylase (ACACA and ACACB) and hormone-sensitive lipase (LIPE) enzymes, respectively. Promotes lipolysis of lipid droplets by mediating phosphorylation of isoform 1 of CHKA (CHKalpha2). Regulates insulin-signaling and glycolysis by phosphorylating IRS1, PFKFB2 and PFKFB3. AMPK stimulates glucose uptake in muscle by increasing the translocation of the glucose transporter SLC2A4/GLUT4 to the plasma membrane, possibly by mediating phosphorylation of TBC1D4/AS160. Regulates transcription and chromatin structure by phosphorylating transcription regulators involved in energy metabolism such as CRTC2/TORC2, FOXO3, histone H2B, HDAC5, MEF2C, MLXIPL/ChREBP, EP300, HNF4A, p53/TP53, SREBF1, SREBF2 and PPARGC1A. Acts as a key regulator of glucose homeostasis in liver by phosphorylating CRTC2/TORC2, leading to CRTC2/TORC2 sequestration in the cytoplasm. In response to stress, phosphorylates 'Ser-36' of histone H2B (H2BS36ph), leading to promote transcription. Acts as a key regulator of cell growth and proliferation by phosphorylating FNIP1, TSC2, RPTOR, WDR24 and ATG1/ULK1: in response to nutrient limitation, negatively regulates the mTORC1 complex by phosphorylating RPTOR component of the mTORC1 complex and by phosphorylating and activating TSC2. Also phosphorylates and inhibits GATOR2 subunit WDR24 in response to nutrient limitation, leading to suppress glucose-mediated mTORC1 activation. In response to energetic stress, phosphorylates FNIP1, inactivating the non-canonical mTORC1 signaling, thereby promoting nuclear translocation of TFEB and TFE3, and inducing transcription of lysosomal or autophagy genes. In response to nutrient limitation, promotes autophagy by phosphorylating and activating ATG1/ULK1. In that process, it also activates WDR45/WIPI4. Phosphorylates CASP6, thereby preventing its autoprocessing and subsequent activation. In response to nutrient limitation, phosphorylates transcription factor FOXO3 promoting FOXO3 mitochondrial import. Also acts as a regulator of cellular polarity by remodeling the actin cytoskeleton; probably by indirectly activating myosin. AMPK also acts as a regulator of circadian rhythm by mediating phosphorylation of CRY1, leading to destabilize it. May regulate the Wnt signaling pathway by phosphorylating CTNNB1, leading to stabilize it. Also has tau-protein kinase activity: in response to amyloid beta A4 protein (APP) exposure, activated by CAMKK2, leading to phosphorylation of MAPT/TAU; however the relevance of such data remains unclear in vivo. Also phosphorylates CFTR, EEF2K, KLC1, NOS3 and SLC12A1. Regulates hepatic lipogenesis. Activated via SIRT3, represses sterol regulatory element-binding protein (SREBP) transcriptional activities and ATP-consuming lipogenesis to restore cellular energy balance. Upon stress, regulates mitochondrial fragmentation through phosphorylation of MTFR1L. In Mus musculus (Mouse), this protein is 5'-AMP-activated protein kinase catalytic subunit alpha-1 (Prkaa1).